Reading from the N-terminus, the 644-residue chain is Exoribonuclease 2 (644 aa).

The 328-residue stretch at 189-516 (RRDLTALDFV…NHRLLKAIIK (328 aa)) folds into the RNB domain. The S1 motif domain maps to 561–643 (DTRFAAEILD…ETRSIIARPA (83 aa)).

It belongs to the RNR ribonuclease family. RNase II subfamily.

Its subcellular location is the cytoplasm. The enzyme catalyses Exonucleolytic cleavage in the 3'- to 5'-direction to yield nucleoside 5'-phosphates.. Its function is as follows. Involved in mRNA degradation. Hydrolyzes single-stranded polyribonucleotides processively in the 3' to 5' direction. The protein is Exoribonuclease 2 of Klebsiella pneumoniae (strain 342).